Reading from the N-terminus, the 326-residue chain is Protein-arginine N-acetylglucosaminyltransferase NleB2 (326 aa).

UDP-N-acetyl-alpha-D-glucosamine is bound by residues 45 to 47 (QWF), Tyr69, and 216 to 219 (YLDM). The DXD motif signature appears at 218–220 (DMD). Position 220 (Asp220) interacts with Mn(2+). Glu250 serves as the catalytic Proton acceptor. Mn(2+) contacts are provided by Asn317 and Ser319. Residues Ser319 and 324–326 (SSW) each bind UDP-N-acetyl-alpha-D-glucosamine.

Belongs to the glycosyltransferase NleB family. It depends on Mn(2+) as a cofactor.

The protein resides in the secreted. Its subcellular location is the host cell. The enzyme catalyses L-arginyl-[protein] + UDP-N-acetyl-alpha-D-glucosamine = N(omega)-(N-acetyl-beta-D-glucosaminyl)-L-arginyl-[protein] + UDP + H(+). Functionally, protein-arginine N-acetylglucosaminyltransferase effector that catalyzes the transfer of a single N-acetylglucosamine (GlcNAc) to a conserved arginine residue of host target proteins. In contrast to NleB1, not able to disrupt TNF signaling in infected cells. Shows a lower enzymatic activity than NleB1. The chain is Protein-arginine N-acetylglucosaminyltransferase NleB2 from Escherichia coli O145:H28 (strain RM12581).